Reading from the N-terminus, the 154-residue chain is Large ribosomal subunit protein uL15 (154 aa).

The segment at 1–61 (MDLSTLKPVA…GGQMPLMRRM (61 aa)) is disordered.

The protein belongs to the universal ribosomal protein uL15 family. In terms of assembly, part of the 50S ribosomal subunit.

Functionally, binds to the 23S rRNA. The protein is Large ribosomal subunit protein uL15 of Oenococcus oeni (strain ATCC BAA-331 / PSU-1).